A 468-amino-acid chain; its full sequence is Argininosuccinate lyase (468 aa).

The protein belongs to the lyase 1 family. Argininosuccinate lyase subfamily.

The protein localises to the cytoplasm. It catalyses the reaction 2-(N(omega)-L-arginino)succinate = fumarate + L-arginine. It functions in the pathway amino-acid biosynthesis; L-arginine biosynthesis; L-arginine from L-ornithine and carbamoyl phosphate: step 3/3. The polypeptide is Argininosuccinate lyase (Paraburkholderia xenovorans (strain LB400)).